The following is a 120-amino-acid chain: Seripauperin-6 (120 aa).

The signal sequence occupies residues 1–20 (MVKLTSIAAGVAAIAATASA).

This sequence belongs to the SRP1/TIP1 family. Seripauperin subfamily.

The polypeptide is Seripauperin-6 (PAU6) (Saccharomyces cerevisiae (strain ATCC 204508 / S288c) (Baker's yeast)).